The chain runs to 202 residues: ATP-dependent Clp protease proteolytic subunit (202 aa).

The active-site Nucleophile is the Ser106. His131 is an active-site residue.

The protein belongs to the peptidase S14 family. Fourteen ClpP subunits assemble into 2 heptameric rings which stack back to back to give a disk-like structure with a central cavity, resembling the structure of eukaryotic proteasomes.

The protein localises to the cytoplasm. The enzyme catalyses Hydrolysis of proteins to small peptides in the presence of ATP and magnesium. alpha-casein is the usual test substrate. In the absence of ATP, only oligopeptides shorter than five residues are hydrolyzed (such as succinyl-Leu-Tyr-|-NHMec, and Leu-Tyr-Leu-|-Tyr-Trp, in which cleavage of the -Tyr-|-Leu- and -Tyr-|-Trp bonds also occurs).. In terms of biological role, cleaves peptides in various proteins in a process that requires ATP hydrolysis. Has a chymotrypsin-like activity. Plays a major role in the degradation of misfolded proteins. In Albidiferax ferrireducens (strain ATCC BAA-621 / DSM 15236 / T118) (Rhodoferax ferrireducens), this protein is ATP-dependent Clp protease proteolytic subunit.